A 411-amino-acid chain; its full sequence is Adherens junction-associated protein 1 (411 aa).

An N-terminal signal peptide occupies residues 1 to 43 (MWIQQLLGLSSMPIRWPGRSLGSHLWILIAMLQLAVDFPSCDS). At 44–283 (LGPGPEFRLL…GETSGLAVHQ (240 aa)) the chain is on the extracellular side. Composition is skewed to low complexity over residues 62-76 (LWSL…LPTP), 121-145 (PPAA…AGAA), and 247-264 (TPVG…SNNG). Disordered stretches follow at residues 62–156 (LWSL…RGRR) and 242–270 (DPWK…IQPP). The helical transmembrane segment at 284–304 (IITITVSLIMVIAALITTLVL) threads the bilayer. The segment at 304–411 (LKNCCAPSGH…VSEKWFEISC (108 aa)) is targeting signals. Residues 305–411 (KNCCAPSGHT…VSEKWFEISC (107 aa)) lie on the Cytoplasmic side of the membrane.

As to quaternary structure, forms a complex with CDH1 and CTNNB1; interacts directly with CTNNB1. Interacts with AP1M2 and with isoform 2 of BSG/CD147.

It is found in the basolateral cell membrane. The protein resides in the apical cell membrane. It localises to the cell junction. The protein localises to the adherens junction. Its function is as follows. Plays a role in cell adhesion and cell migration. The sequence is that of Adherens junction-associated protein 1 (Ajap1) from Rattus norvegicus (Rat).